The following is a 133-amino-acid chain: p53 and DNA damage-regulated protein 1 (133 aa).

It belongs to the prefoldin subunit beta family. Component of the PAQosome complex which is responsible for the biogenesis of several protein complexes and which consists of R2TP complex members RUVBL1, RUVBL2, RPAP3 and PIH1D1, URI complex members PFDN2, PFDN6, PDRG1, UXT and URI1 as well as ASDURF, POLR2E and DNAAF10/WDR92. Predominantly expressed in normal testis and exhibits reduced but detectable expression in other organs.

The protein resides in the cytoplasm. May play a role in chaperone-mediated protein folding. The protein is p53 and DNA damage-regulated protein 1 (PDRG1) of Homo sapiens (Human).